A 229-amino-acid chain; its full sequence is Orotidine 5'-phosphate decarboxylase (229 aa).

Substrate is bound by residues Asp11, Lys33, 60–69 (DLKFHDIPNT), Thr119, Arg180, Gln189, Gly209, and Arg210. Lys62 (proton donor) is an active-site residue.

This sequence belongs to the OMP decarboxylase family. Type 1 subfamily. As to quaternary structure, homodimer.

It carries out the reaction orotidine 5'-phosphate + H(+) = UMP + CO2. It functions in the pathway pyrimidine metabolism; UMP biosynthesis via de novo pathway; UMP from orotate: step 2/2. Catalyzes the decarboxylation of orotidine 5'-monophosphate (OMP) to uridine 5'-monophosphate (UMP). The chain is Orotidine 5'-phosphate decarboxylase from Dichelobacter nodosus (strain VCS1703A).